A 393-amino-acid polypeptide reads, in one-letter code: NAD(P)H-quinone oxidoreductase subunit H, chloroplastic (393 aa).

Belongs to the complex I 49 kDa subunit family. As to quaternary structure, NDH is composed of at least 16 different subunits, 5 of which are encoded in the nucleus.

It is found in the plastid. It localises to the chloroplast thylakoid membrane. The catalysed reaction is a plastoquinone + NADH + (n+1) H(+)(in) = a plastoquinol + NAD(+) + n H(+)(out). It catalyses the reaction a plastoquinone + NADPH + (n+1) H(+)(in) = a plastoquinol + NADP(+) + n H(+)(out). NDH shuttles electrons from NAD(P)H:plastoquinone, via FMN and iron-sulfur (Fe-S) centers, to quinones in the photosynthetic chain and possibly in a chloroplast respiratory chain. The immediate electron acceptor for the enzyme in this species is believed to be plastoquinone. Couples the redox reaction to proton translocation, and thus conserves the redox energy in a proton gradient. This is NAD(P)H-quinone oxidoreductase subunit H, chloroplastic from Solanum tuberosum (Potato).